A 157-amino-acid chain; its full sequence is UPF0127 protein TK1120 (157 aa).

This sequence belongs to the UPF0127 family.

The sequence is that of UPF0127 protein TK1120 from Thermococcus kodakarensis (strain ATCC BAA-918 / JCM 12380 / KOD1) (Pyrococcus kodakaraensis (strain KOD1)).